The following is a 587-amino-acid chain: Methylcrotonoyl-CoA carboxylase beta chain, mitochondrial (587 aa).

The transit peptide at 1–26 (MLRILGRRVVSASKELTSIQQWRIRP) directs the protein to the mitochondrion. Residues 68 to 324 (MEGILSELRS…AAKQGMEGTF (257 aa)) enclose the CoA carboxyltransferase N-terminal domain. Residues 68-579 (MEGILSELRS…SAALNRPLED (512 aa)) form a carboxyltransferase region. The 247-residue stretch at 333–579 (EPLYDINELR…SAALNRPLED (247 aa)) folds into the CoA carboxyltransferase C-terminal domain. The segment at 367–396 (EFDEFKKQYGTTLVTGFARIYGQTVGIIGN) is acyl-CoA binding.

It belongs to the AccD/PCCB family. In terms of assembly, probably a heterodimer composed of biotin-containing alpha subunits and beta subunits. In terms of tissue distribution, in roots, cotyledons, leaves, flowers, ovaries, siliques and embryos.

The protein localises to the mitochondrion matrix. It carries out the reaction 3-methylbut-2-enoyl-CoA + hydrogencarbonate + ATP = 3-methyl-(2E)-glutaconyl-CoA + ADP + phosphate + H(+). It participates in amino-acid degradation; L-leucine degradation; (S)-3-hydroxy-3-methylglutaryl-CoA from 3-isovaleryl-CoA: step 2/3. Its function is as follows. Carboxyltransferase subunit of the 3-methylcrotonyl-CoA carboxylase, an enzyme that catalyzes the conversion of 3-methylcrotonyl-CoA to 3-methylglutaconyl-CoA, a critical step for leucine and isovaleric acid catabolism. The sequence is that of Methylcrotonoyl-CoA carboxylase beta chain, mitochondrial (MCCB) from Arabidopsis thaliana (Mouse-ear cress).